We begin with the raw amino-acid sequence, 385 residues long: UPF0496 protein At3g28290 (385 aa).

Residues 138-214 (KDKENDVGKK…IEMEISSRKK (77 aa)) adopt a coiled-coil conformation. The next 2 membrane-spanning stretches (helical) occupy residues 217-237 (IISN…SMVL) and 242-262 (VGAG…IGWV). Residues 267-294 (ILENKIQAREKQEEALKKAHRIANEMDK) adopt a coiled-coil conformation.

This sequence belongs to the UPF0496 family. In terms of tissue distribution, widely expressed.

The protein localises to the membrane. This Arabidopsis thaliana (Mouse-ear cress) protein is UPF0496 protein At3g28290.